A 341-amino-acid polypeptide reads, in one-letter code: GTP-binding protein REM 2 (341 aa).

Acidic residues predominate over residues M1–T13. 2 disordered regions span residues M1–P71 and V84–E106. Positions L18 to G30 are enriched in polar residues. S27 carries the phosphoserine modification. The segment covering P90 to E106 has biased composition (low complexity). GTP contacts are provided by residues G122–S129, N230–D233, and A261–A262. The segment at R282–L309 is disordered. Residues P294 to P303 show a composition bias toward pro residues. Position 296 is a phosphoserine (S296).

The protein belongs to the small GTPase superfamily. RGK family.

It localises to the cell membrane. Its function is as follows. Binds GTP saturably and exhibits a low intrinsic rate of GTP hydrolysis. The polypeptide is GTP-binding protein REM 2 (Rem2) (Mus musculus (Mouse)).